Reading from the N-terminus, the 308-residue chain is tRNA dimethylallyltransferase (308 aa).

Position 9-16 (9-16) interacts with ATP; that stretch reads GPTAAGKT. Residue 11–16 coordinates substrate; it reads TAAGKT. 2 interaction with substrate tRNA regions span residues 34-37 and 158-162; these read DSMQ and QRLLR.

This sequence belongs to the IPP transferase family. In terms of assembly, monomer. The cofactor is Mg(2+).

It carries out the reaction adenosine(37) in tRNA + dimethylallyl diphosphate = N(6)-dimethylallyladenosine(37) in tRNA + diphosphate. Catalyzes the transfer of a dimethylallyl group onto the adenine at position 37 in tRNAs that read codons beginning with uridine, leading to the formation of N6-(dimethylallyl)adenosine (i(6)A). The sequence is that of tRNA dimethylallyltransferase from Maricaulis maris (strain MCS10) (Caulobacter maris).